We begin with the raw amino-acid sequence, 547 residues long: Agglutinin-1 (547 aa).

The first 20 residues, 1–20, serve as a signal peptide directing secretion; sequence MKFETTKNKLHGNAYYQAQF. Q21 bears the Pyrrolidone carboxylic acid mark. The active site involves E183. 3 cysteine pairs are disulfide-bonded: C266–C288, C305–C324, and C348–C365. The propeptide at 279–280 is linker peptide; sequence RS. Positions 292 to 419 constitute a Ricin B-type lectin 1 domain; sequence YEPTVRIGGR…YRMRQGWRTG (128 aa). The stretch at 302 to 344 is one 1-alpha repeat; sequence DGLCVDVSDNAYNNGNPIILWKCKDQLEVNQLWTLKSDKTIRS. The stretch at 345-385 is one 1-beta repeat; sequence KGKCLTTYGYAPGNYVMIYDCSSAVAEATYWDIWDNGTIIN. N380 and N420 each carry an N-linked (GlcNAc...) asparagine glycan. The stretch at 388-420 is one 1-gamma repeat; it reads SGLVLSAESSSMGGTLTVQKNDYRMRQGWRTGN. Residues 422–546 form the Ricin B-type lectin 2 domain; sequence TSPFVTSIAG…GNANQMWATL (125 aa). A 2-alpha repeat occupies 433–468; sequence FKLCMEAHGNSMWLDVCDITKEEQQWAVYPDGSIRP. Cystine bridges form between C436-C449 and C475-C492. Residues 472-511 form a 2-beta repeat; the sequence is TNNCLTCEEHKQGATIVMMGCSNAWASQRWVFKSDGTIYN. One copy of the 2-gamma repeat lies at 514–547; the sequence is DDMVMDVKSSDPSLKQIILWPYTGNANQMWATLF.

It in the N-terminal section; belongs to the ribosome-inactivating protein family. Type 2 RIP subfamily. Heterotetramer of two A and two B chains.

It catalyses the reaction Endohydrolysis of the N-glycosidic bond at one specific adenosine on the 28S rRNA.. The A chain is responsible for inhibiting protein synthesis through the catalytic inactivation of 60S ribosomal subunits by removing adenine from position 4,324 of 28S rRNA. Less toxic than abrin-a. In terms of biological role, the B chain is a galactose-specific lectin that facilitates the binding to the cell membrane that precedes endocytosis. The sequence is that of Agglutinin-1 from Abrus precatorius (Indian licorice).